The following is a 397-amino-acid chain: Elongation factor Tu (397 aa).

A tr-type G domain is found at 10 to 207 (LPHVNVGTIG…TLDAYIPEPV (198 aa)). The interval 19–26 (GHVDHGKT) is G1. Position 19–26 (19–26 (GHVDHGKT)) interacts with GTP. Residue Thr26 participates in Mg(2+) binding. Positions 60–64 (GITIN) are G2. The interval 81–84 (DCPG) is G3. GTP contacts are provided by residues 81–85 (DCPGH) and 136–139 (NKAD). Residues 136-139 (NKAD) are G4. Residues 174–176 (SAR) form a G5 region.

This sequence belongs to the TRAFAC class translation factor GTPase superfamily. Classic translation factor GTPase family. EF-Tu/EF-1A subfamily. Monomer.

Its subcellular location is the cytoplasm. It catalyses the reaction GTP + H2O = GDP + phosphate + H(+). Its function is as follows. GTP hydrolase that promotes the GTP-dependent binding of aminoacyl-tRNA to the A-site of ribosomes during protein biosynthesis. This is Elongation factor Tu from Pseudomonas entomophila (strain L48).